A 556-amino-acid chain; its full sequence is CDP-diacylglycerol--glycerol-3-phosphate 3-phosphatidyltransferase, mitochondrial (556 aa).

The N-terminal 28 residues, 1 to 28 (MAVAAAAAAGPVFWRRLLGLLPGRPGLA), are a transit peptide targeting the mitochondrion. The residue at position 49 (Ser49) is a Phosphoserine. 124–131 (ASLYLGTG) is a binding site for ATP. 2 PLD phosphodiesterase domains span residues 215–241 (TIGL…SDSY) and 460–493 (RGWT…GYRS). Residues His220, Lys222, and Asp227 contribute to the active site.

Belongs to the CDP-alcohol phosphatidyltransferase class-II family.

It localises to the mitochondrion. It carries out the reaction a CDP-1,2-diacyl-sn-glycerol + sn-glycerol 3-phosphate = a 1,2-diacyl-sn-glycero-3-phospho-(1'-sn-glycero-3'-phosphate) + CMP + H(+). The protein operates within phospholipid metabolism; phosphatidylglycerol biosynthesis; phosphatidylglycerol from CDP-diacylglycerol: step 1/2. Its activity is regulated as follows. Activated by calcium and magnesium and inhibited by other bivalent cations. In terms of biological role, functions in the biosynthesis of the anionic phospholipids phosphatidylglycerol and cardiolipin. This chain is CDP-diacylglycerol--glycerol-3-phosphate 3-phosphatidyltransferase, mitochondrial (PGS1), found in Homo sapiens (Human).